The following is a 76-amino-acid chain: Putative membrane protein insertion efficiency factor (76 aa).

This sequence belongs to the UPF0161 family.

The protein resides in the cell inner membrane. Could be involved in insertion of integral membrane proteins into the membrane. The chain is Putative membrane protein insertion efficiency factor from Paraburkholderia phytofirmans (strain DSM 17436 / LMG 22146 / PsJN) (Burkholderia phytofirmans).